The following is a 181-amino-acid chain: GATA zinc finger domain-containing protein 22 (181 aa).

The GATA-type zinc-finger motif lies at 118-145; it reads CQICLTNNTPYWRWSVIENNKIRVCNRC.

In Dictyostelium discoideum (Social amoeba), this protein is GATA zinc finger domain-containing protein 22 (gtaV).